Reading from the N-terminus, the 352-residue chain is tRNA pseudouridine synthase D (352 aa).

The active-site Nucleophile is Asp-81. The TRUD domain maps to 157 to 303; that stretch reads GIPNYFGAQR…MSHERRILRL (147 aa).

This sequence belongs to the pseudouridine synthase TruD family.

It carries out the reaction uridine(13) in tRNA = pseudouridine(13) in tRNA. In terms of biological role, responsible for synthesis of pseudouridine from uracil-13 in transfer RNAs. In Pseudomonas fluorescens (strain Pf0-1), this protein is tRNA pseudouridine synthase D.